The chain runs to 356 residues: MSLPTTSSPLTNDQEFAKPVRNGKIFENPKSFTNWGGRPGLTNIFKLVLRETSHENLPSDKKVLDSTLPVHNITADDFHSESGLFATWLGHATVLVDLEGVKFVTDPVWADRASFTSFAGPKRYRPPPMKLEDLPDLDFAVVSHDHYDHLDADAVKRITNLNPQIKWFVPLGLKKWMKNQGIGADGSNTVTELNWGESSEFVKNGKTITIWCLPAQHSGQRGLSDHNHRLWSGWAVIGENRRFYFPGDTGFCDVEFKKIGEKLGPFDLAAIPIGAYEPRWFMKSHHINPDEAVEVHKLVRARNSIGIHWGTYPMGTTEYYLEPRDKLKELMDAREDLKDTSFVTVDMGEIWEASDR.

Histidine 144 and histidine 146 together coordinate Zn(2+). Tyrosine 147 serves as a coordination point for an N-acyl-1,2-diacyl-sn-glycero-3-phosphoethanolamine. Residues aspartate 148, histidine 149, histidine 217, and aspartate 248 each coordinate Zn(2+). Histidine 286 is an an N-acyl-1,2-diacyl-sn-glycero-3-phosphoethanolamine binding site. Zn(2+) is bound at residue histidine 308.

This sequence belongs to the NAPE-PLD family. Requires Zn(2+) as cofactor. Expressed in interneurons that are in close proximity to the primary sensory neurons. Predominantly expressed in the pharynx but can also be found in cell bodies of the dorsal and ventral nerve cords.

The catalysed reaction is an N-acyl-1,2-diacyl-sn-glycero-3-phosphoethanolamine + H2O = an N-acylethanolamine + a 1,2-diacyl-sn-glycero-3-phosphate + H(+). The enzyme catalyses 1,2-dihexadecanoyl-sn-glycero-3-phospho-(N-hexadecanoyl)-ethanolamine + H2O = 1,2-dihexadecanoyl-sn-glycero-3-phosphate + N-hexadecanoylethanolamine + H(+). It catalyses the reaction N-(5Z,8Z,11Z,14Z-eicosatetraenoyl)-1,2-di-(9Z-octadecenoyl)-sn-glycero-3-phosphoethanolamine + H2O = N-(5Z,8Z,11Z,14Z-eicosatetraenoyl)-ethanolamine + 1,2-di-(9Z-octadecenoyl)-sn-glycero-3-phosphate + H(+). D-type phospholipase that hydrolyzes N-acyl-phosphatidylethanolamines (NAPEs) to produce bioactive N-acylethanolamines/fatty acid ethanolamides (NAEs/FAEs) and phosphatidic acid. NAEs are bioactive lipids that are involved in diverse physiological processes such as growth and lifespan. This Caenorhabditis elegans protein is N-acyl-phosphatidylethanolamine-hydrolyzing phospholipase D 1.